Consider the following 120-residue polypeptide: MFSLTQKIGFNAEKTACRYLQKQGLSFITKNFRYKQGEIDLIMSDQSMLVFIEVRYRRFSDFIHPVATVTPLKQRRLIKTALHYLQKHRPLDKISCRFDIVGITADRQITWIKNAIEVEY.

It belongs to the UPF0102 family.

The polypeptide is UPF0102 protein CBU_1742 (Coxiella burnetii (strain RSA 493 / Nine Mile phase I)).